The primary structure comprises 161 residues: MSLIPSIFGGRRSNVFDPFSQDLWDPFEGFFTPSSALANASTARDVAAFTNARVDWKETPEAHVFKADLPGLKKEEVKVEVEDKNVLQISGERSKENEEKNDKWHRVERASGKFMRRFRLPENAKMEEVKATMENGVLTVVVPKAPEKKPQVKSIDISGAN.

Residues 45–160 (DVAAFTNARV…QVKSIDISGA (116 aa)) enclose the sHSP domain.

Belongs to the small heat shock protein (HSP20) family. May form oligomeric structures. Binds to AKR2A.

It is found in the cytoplasm. In Arabidopsis thaliana (Mouse-ear cress), this protein is 18.1 kDa class I heat shock protein (HSP18.1).